The sequence spans 394 residues: Imidazolonepropionase (394 aa).

2 residues coordinate Fe(3+): histidine 61 and histidine 63. Residues histidine 61 and histidine 63 each coordinate Zn(2+). 4-imidazolone-5-propanoate is bound by residues arginine 70, tyrosine 133, and histidine 164. Tyrosine 133 contributes to the N-formimidoyl-L-glutamate binding site. Histidine 225 contacts Fe(3+). Residue histidine 225 coordinates Zn(2+). A 4-imidazolone-5-propanoate-binding site is contributed by glutamate 228. Aspartate 299 serves as a coordination point for Fe(3+). Aspartate 299 is a binding site for Zn(2+).

It belongs to the metallo-dependent hydrolases superfamily. HutI family. Zn(2+) is required as a cofactor. Requires Fe(3+) as cofactor.

The protein localises to the cytoplasm. It carries out the reaction 4-imidazolone-5-propanoate + H2O = N-formimidoyl-L-glutamate. It functions in the pathway amino-acid degradation; L-histidine degradation into L-glutamate; N-formimidoyl-L-glutamate from L-histidine: step 3/3. Functionally, catalyzes the hydrolytic cleavage of the carbon-nitrogen bond in imidazolone-5-propanoate to yield N-formimidoyl-L-glutamate. It is the third step in the universal histidine degradation pathway. The sequence is that of Imidazolonepropionase from Picrophilus torridus (strain ATCC 700027 / DSM 9790 / JCM 10055 / NBRC 100828 / KAW 2/3).